The following is a 298-amino-acid chain: Probable alpha-L-glutamate ligase 2 (298 aa).

The ATP-grasp domain maps to 104-287 (MQLLSRQGIG…VADAIICFME (184 aa)). Residues Lys-141, 178–179 (EY), Asp-187, and 211–213 (RSN) each bind ATP. The Mg(2+) site is built by Asp-248, Glu-260, and Asn-262. Positions 248, 260, and 262 each coordinate Mn(2+).

Belongs to the RimK family. Mg(2+) is required as a cofactor. The cofactor is Mn(2+).

This Shewanella frigidimarina (strain NCIMB 400) protein is Probable alpha-L-glutamate ligase 2.